Consider the following 1094-residue polypeptide: Carbamoyl phosphate synthase large chain (1094 aa).

The tract at residues 1-402 (MPRRSDLHRI…AFQKALRALE (402 aa)) is carboxyphosphate synthetic domain. 12 residues coordinate ATP: Arg-129, Arg-169, Gly-175, Gly-176, Arg-208, Leu-210, Glu-215, Gly-241, Val-242, His-243, Gln-285, and Glu-299. An ATP-grasp 1 domain is found at 133–328 (GEAMEKIGLR…IARIGAKLAV (196 aa)). Positions 285, 299, and 301 each coordinate Mg(2+). The Mn(2+) site is built by Gln-285, Glu-299, and Asn-301. An oligomerization domain region spans residues 403–552 (TGRSGWTIAE…YLYGNYDEES (150 aa)). The carbamoyl phosphate synthetic domain stretch occupies residues 553-936 (EAATEGRKKV…AFMKSQLAAD (384 aa)). An ATP-grasp 2 domain is found at 679-870 (EAIARELGIE…LPSVAARLML (192 aa)). 10 residues coordinate ATP: Arg-715, Arg-754, Leu-756, Glu-761, Gly-786, Ile-787, His-788, Ser-789, Gln-829, and Glu-841. Positions 829, 841, and 843 each coordinate Mg(2+). Mn(2+) contacts are provided by Gln-829, Glu-841, and Asn-843. An MGS-like domain is found at 937-1077 (NALPREGTVF…QEWHEILRAP (141 aa)). The interval 937-1094 (NALPREGTVF…AGSTQPAGVA (158 aa)) is allosteric domain.

It belongs to the CarB family. In terms of assembly, composed of two chains; the small (or glutamine) chain promotes the hydrolysis of glutamine to ammonia, which is used by the large (or ammonia) chain to synthesize carbamoyl phosphate. Tetramer of heterodimers (alpha,beta)4. The cofactor is Mg(2+). It depends on Mn(2+) as a cofactor.

It catalyses the reaction hydrogencarbonate + L-glutamine + 2 ATP + H2O = carbamoyl phosphate + L-glutamate + 2 ADP + phosphate + 2 H(+). The catalysed reaction is hydrogencarbonate + NH4(+) + 2 ATP = carbamoyl phosphate + 2 ADP + phosphate + 2 H(+). Its pathway is amino-acid biosynthesis; L-arginine biosynthesis; carbamoyl phosphate from bicarbonate: step 1/1. It functions in the pathway pyrimidine metabolism; UMP biosynthesis via de novo pathway; (S)-dihydroorotate from bicarbonate: step 1/3. In terms of biological role, large subunit of the glutamine-dependent carbamoyl phosphate synthetase (CPSase). CPSase catalyzes the formation of carbamoyl phosphate from the ammonia moiety of glutamine, carbonate, and phosphate donated by ATP, constituting the first step of 2 biosynthetic pathways, one leading to arginine and/or urea and the other to pyrimidine nucleotides. The large subunit (synthetase) binds the substrates ammonia (free or transferred from glutamine from the small subunit), hydrogencarbonate and ATP and carries out an ATP-coupled ligase reaction, activating hydrogencarbonate by forming carboxy phosphate which reacts with ammonia to form carbamoyl phosphate. The chain is Carbamoyl phosphate synthase large chain from Gemmatimonas aurantiaca (strain DSM 14586 / JCM 11422 / NBRC 100505 / T-27).